The sequence spans 432 residues: Trigger factor (432 aa).

The PPIase FKBP-type domain occupies 161-246; the sequence is EDRVTIDFTG…LKKVEERELP (86 aa).

Belongs to the FKBP-type PPIase family. Tig subfamily. In terms of assembly, homodimer and monomer. In vivo most of the ribosomes are in complex with monomeric TF. Uncomplexed TF, however, is in a monomer-dimer equilibrium with approximately two thirds of TF existing in a dimeric state.

It localises to the cytoplasm. The enzyme catalyses [protein]-peptidylproline (omega=180) = [protein]-peptidylproline (omega=0). Its function is as follows. Involved in protein export. Acts as a chaperone by maintaining the newly synthesized protein in an open conformation. Functions as a peptidyl-prolyl cis-trans isomerase. This chain is Trigger factor, found in Shigella boydii serotype 18 (strain CDC 3083-94 / BS512).